We begin with the raw amino-acid sequence, 62 residues long: Sperm histone P2a (62 aa).

This sequence belongs to the protamine P2 family. Post-translationally, proteolytic processing into mature chains is required for histone eviction during spermatogenesis. Transition proteins (TNP1 and TNP2) are required for processing. As to expression, testis.

The protein resides in the nucleus. It is found in the chromosome. In terms of biological role, protamines substitute for histones in the chromatin of sperm during the haploid phase of spermatogenesis. They compact sperm DNA into a highly condensed, stable and inactive complex. The protein is Sperm histone P2a of Equus caballus (Horse).